Consider the following 215-residue polypeptide: 3-isopropylmalate dehydratase small subunit (215 aa).

The protein belongs to the LeuD family. LeuD type 1 subfamily. Heterodimer of LeuC and LeuD.

The catalysed reaction is (2R,3S)-3-isopropylmalate = (2S)-2-isopropylmalate. Its pathway is amino-acid biosynthesis; L-leucine biosynthesis; L-leucine from 3-methyl-2-oxobutanoate: step 2/4. Catalyzes the isomerization between 2-isopropylmalate and 3-isopropylmalate, via the formation of 2-isopropylmaleate. The polypeptide is 3-isopropylmalate dehydratase small subunit (Cellvibrio japonicus (strain Ueda107) (Pseudomonas fluorescens subsp. cellulosa)).